A 591-amino-acid chain; its full sequence is Cytidine monophosphate-N-acetylneuraminic acid hydroxylase (591 aa).

In terms of domain architecture, Rieske spans 16-114 (LASAEVESLK…IENDDENGVS (99 aa)). 4 residues coordinate [2Fe-2S] cluster: cysteine 56, histidine 58, cysteine 77, and histidine 80.

Belongs to the CMP-Neu5Ac hydroxylase family. It depends on [2Fe-2S] cluster as a cofactor.

The protein resides in the cytoplasm. It catalyses the reaction CMP-N-acetyl-beta-neuraminate + 2 Fe(II)-[cytochrome b5] + O2 + 2 H(+) = CMP-N-glycoloyl-beta-neuraminate + 2 Fe(III)-[cytochrome b5] + H2O. The protein operates within amino-sugar metabolism; N-acetylneuraminate metabolism. Its function is as follows. Sialic acids are components of carbohydrate chains of glycoconjugates and are involved in cell-cell recognition and cell-pathogen interactions. Catalyzes the conversion of CMP-N-acetylneuraminic acid (CMP-Neu5Ac) into its hydroxylated derivative CMP-N-glycolylneuraminic acid (CMP-Neu5Gc), a sialic acid abundantly expressed at the surface of many cells. This Xenopus laevis (African clawed frog) protein is Cytidine monophosphate-N-acetylneuraminic acid hydroxylase (cmah).